We begin with the raw amino-acid sequence, 360 residues long: Glyceraldehyde-3-phosphate dehydrogenase (360 aa).

NAD(+) contacts are provided by residues 13-14, Asp35, and Arg82; that span reads RI. Residues 153-155, Thr184, 213-214, and Arg236 contribute to the D-glyceraldehyde 3-phosphate site; these read SCT and TG. Residue Cys154 is the Nucleophile of the active site. An NAD(+)-binding site is contributed by Asn318.

It belongs to the glyceraldehyde-3-phosphate dehydrogenase family. In terms of assembly, homotetramer.

The enzyme catalyses D-glyceraldehyde 3-phosphate + phosphate + NAD(+) = (2R)-3-phospho-glyceroyl phosphate + NADH + H(+). Its pathway is carbohydrate degradation; glycolysis; pyruvate from D-glyceraldehyde 3-phosphate: step 1/5. Its function is as follows. Key enzyme in glycolysis that catalyzes the first step of the pathway by converting D-glyceraldehyde 3-phosphate (G3P) into 3-phospho-D-glyceroyl phosphate. Essential for the maintenance of cellular ATP levels and carbohydrate metabolism. This is Glyceraldehyde-3-phosphate dehydrogenase from Atriplex nummularia (Old man saltbush).